A 42-amino-acid chain; its full sequence is Photosystem I reaction center subunit IX (42 aa).

A helical membrane pass occupies residues 7–27 (YLSAAPVLSTLWLGALAGLLI).

The protein belongs to the PsaJ family.

It localises to the plastid membrane. May help in the organization of the PsaE and PsaF subunits. The chain is Photosystem I reaction center subunit IX from Cuscuta exaltata (Tall dodder).